Here is a 754-residue protein sequence, read N- to C-terminus: 5-methyltetrahydropteroyltriglutamate--homocysteine methyltransferase (754 aa).

5-methyltetrahydropteroyltri-L-glutamate-binding positions include 17–20 and Lys-117; that span reads RELK. L-homocysteine-binding positions include 431-433 and Glu-484; that span reads IGS. Residues 431-433 and Glu-484 contribute to the L-methionine site; that span reads IGS. Residues 515–516 and Trp-561 contribute to the 5-methyltetrahydropteroyltri-L-glutamate site; that span reads RC. Asp-599 is an L-homocysteine binding site. Asp-599 lines the L-methionine pocket. A 5-methyltetrahydropteroyltri-L-glutamate-binding site is contributed by Glu-605. The Zn(2+) site is built by His-641, Cys-643, and Glu-665. The active-site Proton donor is His-694. Cys-726 provides a ligand contact to Zn(2+).

It belongs to the vitamin-B12 independent methionine synthase family. The cofactor is Zn(2+).

The catalysed reaction is 5-methyltetrahydropteroyltri-L-glutamate + L-homocysteine = tetrahydropteroyltri-L-glutamate + L-methionine. Its pathway is amino-acid biosynthesis; L-methionine biosynthesis via de novo pathway; L-methionine from L-homocysteine (MetE route): step 1/1. Its function is as follows. Catalyzes the transfer of a methyl group from 5-methyltetrahydrofolate to homocysteine resulting in methionine formation. The polypeptide is 5-methyltetrahydropteroyltriglutamate--homocysteine methyltransferase (Salmonella agona (strain SL483)).